Reading from the N-terminus, the 251-residue chain is 1-(5-phosphoribosyl)-5-[(5-phosphoribosylamino)methylideneamino] imidazole-4-carboxamide isomerase (251 aa).

The Proton acceptor role is filled by D8. Catalysis depends on D131, which acts as the Proton donor.

This sequence belongs to the HisA/HisF family.

The protein localises to the cytoplasm. The catalysed reaction is 1-(5-phospho-beta-D-ribosyl)-5-[(5-phospho-beta-D-ribosylamino)methylideneamino]imidazole-4-carboxamide = 5-[(5-phospho-1-deoxy-D-ribulos-1-ylimino)methylamino]-1-(5-phospho-beta-D-ribosyl)imidazole-4-carboxamide. It participates in amino-acid biosynthesis; L-histidine biosynthesis; L-histidine from 5-phospho-alpha-D-ribose 1-diphosphate: step 4/9. The chain is 1-(5-phosphoribosyl)-5-[(5-phosphoribosylamino)methylideneamino] imidazole-4-carboxamide isomerase from Burkholderia lata (strain ATCC 17760 / DSM 23089 / LMG 22485 / NCIMB 9086 / R18194 / 383).